A 253-amino-acid chain; its full sequence is POU Class 2 homeobox-associating factor 3 (253 aa).

Positions 5-27 constitute an OCA domain; it reads PKVYQGVRVKMTVKELLQQRRAH.

Belongs to the POU2AF family. As to quaternary structure, interacts with POU2F3 in a DNA-dependent manner; this interaction increases POU2F3 transactivation activity. Expressed in tuft cells.

Its subcellular location is the cytoplasm. It localises to the nucleus. Its function is as follows. Transcriptional coactivator that specifically associates with POU2F3. This complex drives the development of tuft cells, a rare a rare chemosensory cells that coordinate immune and neural functions within mucosal epithelial tissues. This Mus musculus (Mouse) protein is POU Class 2 homeobox-associating factor 3.